The sequence spans 309 residues: ADP-L-glycero-D-manno-heptose-6-epimerase (309 aa).

Residues F10–I11, D31–N32, K38, K53, L75–S79, and N92 contribute to the NADP(+) site. Y140 serves as the catalytic Proton acceptor. K144 lines the NADP(+) pocket. A substrate-binding site is contributed by N169. NADP(+)-binding residues include V170 and K178. The active-site Proton acceptor is K178. Residues S180, H187, F201 to S204, R209, and Y272 each bind substrate.

The protein belongs to the NAD(P)-dependent epimerase/dehydratase family. HldD subfamily. As to quaternary structure, homopentamer. NADP(+) serves as cofactor.

It catalyses the reaction ADP-D-glycero-beta-D-manno-heptose = ADP-L-glycero-beta-D-manno-heptose. It participates in nucleotide-sugar biosynthesis; ADP-L-glycero-beta-D-manno-heptose biosynthesis; ADP-L-glycero-beta-D-manno-heptose from D-glycero-beta-D-manno-heptose 7-phosphate: step 4/4. Its function is as follows. Catalyzes the interconversion between ADP-D-glycero-beta-D-manno-heptose and ADP-L-glycero-beta-D-manno-heptose via an epimerization at carbon 6 of the heptose. This chain is ADP-L-glycero-D-manno-heptose-6-epimerase, found in Hamiltonella defensa subsp. Acyrthosiphon pisum (strain 5AT).